A 160-amino-acid polypeptide reads, in one-letter code: Ureidoglycolate lyase (160 aa).

It belongs to the ureidoglycolate lyase family. Homodimer. The cofactor is Ni(2+).

The enzyme catalyses (S)-ureidoglycolate = urea + glyoxylate. It functions in the pathway nitrogen metabolism; (S)-allantoin degradation. In terms of biological role, catalyzes the catabolism of the allantoin degradation intermediate (S)-ureidoglycolate, generating urea and glyoxylate. Involved in the utilization of allantoin as nitrogen source. In Salmonella typhimurium (strain LT2 / SGSC1412 / ATCC 700720), this protein is Ureidoglycolate lyase.